We begin with the raw amino-acid sequence, 254 residues long: Low affinity immunoglobulin gamma Fc region receptor III-A (254 aa).

Residues 1–16 (MWQLLLPTALLLLVSA) form the signal peptide. Over 17-208 (GMRAEDLPKA…ISSFFPPGYQ (192 aa)) the chain is Extracellular. Ig-like C2-type domains are found at residues 24–105 (PKAV…LEVH) and 107–189 (GWLL…VNIT). Cystine bridges form between C47–C89 and C128–C172. Residues N56, N63, and N82 are each glycosylated (N-linked (GlcNAc...) asparagine). N-linked (GlcNAc...) asparagine glycosylation is found at N180 and N187. A helical membrane pass occupies residues 209–229 (VSFCLVMVLLFAVDTGLYFSM). At 230-254 (KKSIPSSTRDWEDHKFKWSKDPQDK) the chain is on the cytoplasmic side.

In terms of assembly, forms a heterooligomeric complex with ITAM-containing signaling subunits, either a homodimer of CD247, a homodimer of FCER1G or a heterodimer of CD247 and FCER1G. Interacts (via transmembrane domain) with signaling subunits; this interaction is a prerequisite for receptor complex expression on the cell surface and intracellular signal transduction. Binds the Fc region of antigen-complexed IgG with a preference for IgG1 and IgG3 isotypes. Interacts with CD2; this interaction is involved in NK cell activation and cytotoxicity. Interacts with S100A4; this interaction inhibits PKC-dependent phosphorylation of FCGR3A. In terms of processing, glycosylated. Glycosylation plays an inhibitory role in the interaction with IgG1 and IgG2. Undergoes rapid ectodomain shedding upon NK cell stimulation. The soluble form is produced by a proteolytic cleavage mediated by ADAM17. Repeated stimulation causes receptor shedding, a mechanism that allows for increased NK cell motility and detachment from opsonized target cells while avoiding activation-induced NK cell apoptosis. As to expression, lymphocytes and monocytes.

The protein resides in the cell membrane. It localises to the secreted. Functionally, receptor for the invariable Fc fragment of immunoglobulin gamma (IgG). Optimally activated upon binding of clustered antigen-IgG complexes displayed on cell surfaces, triggers lysis of antibody-coated cells, a process known as antibody-dependent cellular cytotoxicity (ADCC). Does not bind free monomeric IgG, thus avoiding inappropriate effector cell activation in the absence of antigenic trigger. Mediates IgG effector functions on natural killer (NK) cells. Binds antigen-IgG complexes generated upon infection and triggers NK cell-dependent cytokine production and degranulation to limit viral load and propagation. Involved in the generation of memory-like adaptive NK cells capable to produce high amounts of IFNG and to efficiently eliminate virus-infected cells via ADCC. Regulates NK cell survival and proliferation, in particular by preventing NK cell progenitor apoptosis. Fc-binding subunit that associates with CD247 and/or FCER1G adapters to form functional signaling complexes. Following the engagement of antigen-IgG complexes, triggers phosphorylation of immunoreceptor tyrosine-based activation motif (ITAM)-containing adapters with subsequent activation of phosphatidylinositol 3-kinase signaling and sustained elevation of intracellular calcium that ultimately drive NK cell activation. The ITAM-dependent signaling coupled to receptor phosphorylation by PKC mediates robust intracellular calcium flux that leads to production of pro-inflammatory cytokines, whereas in the absence of receptor phosphorylation it mainly activates phosphatidylinositol 3-kinase signaling leading to cell degranulation. Costimulates NK cells and trigger lysis of target cells independently of IgG binding. Mediates the antitumor activities of therapeutic antibodies. Upon ligation on monocytes triggers TNFA-dependent ADCC of IgG-coated tumor cells. Mediates enhanced ADCC in response to afucosylated IgGs. The protein is Low affinity immunoglobulin gamma Fc region receptor III-A (FCGR3A) of Macaca fascicularis (Crab-eating macaque).